A 326-amino-acid chain; its full sequence is Protein LEG1 homolog (326 aa).

Positions 1 to 22 (MKSNKTIFLILLFLINFNSIYS) are cleaved as a signal peptide. 5 N-linked (GlcNAc...) asparagine glycosylation sites follow: asparagine 58, asparagine 85, asparagine 165, asparagine 226, and asparagine 245.

The protein belongs to the LEG1 family.

The protein localises to the secreted. This is Protein LEG1 homolog from Dictyostelium discoideum (Social amoeba).